We begin with the raw amino-acid sequence, 152 residues long: Protein Smg homolog (152 aa).

It belongs to the Smg family.

In Bordetella avium (strain 197N), this protein is Protein Smg homolog.